A 432-amino-acid chain; its full sequence is Monooxygenase penA (432 aa).

The helical transmembrane segment at 7-29 (FKIAIIGAGPAGLTLASLLTASP) threads the bilayer. The N-linked (GlcNAc...) asparagine glycan is linked to asparagine 33.

Belongs to the aromatic-ring hydroxylase family. FAD serves as cofactor.

It is found in the membrane. It participates in secondary metabolite biosynthesis. Its pathway is alkaloid biosynthesis. It functions in the pathway mycotoxin biosynthesis. In terms of biological role, monooxygenase; part of the gene cluster that mediates the biosynthesis of penigequinolones, potent insecticidal alkaloids that contain a highly modified 10-carbon prenyl group. The first stage is catalyzed by the nonribosomal peptide synthetase penN that condenses anthranilic acid and O-methyl-L-tyrosine to produce 4'-methoxycyclopeptin. 4'-methoxycyclopeptin is then converted to 4'-methoxydehydrocyclopeptin by the ketoglutarate-dependent dioxygenase penM through dehydrogenation to form a double bond between C-alpha and C-beta of the O-methyltyrosine side chain. PenM also converts its first product methoxydehydrocyclopeptin to 4'-methoxycyclopenin. The following conversion of 4'methoxycyclopenin into 4'-methoxyviridicatin is catalyzed by the cyclopenase penL. 4'-methoxyviridicatin is the precursor of quinolone natural products, and is further converted to quinolinone B. The prenyltransferase penI then catalyzes the canonical Friedel-Crafts alkylation of quinolinone B with dimethylallyl cation to yield dimethylallyl quinolone, which is subjected to FAD-dependent dehydrogenation by the FAD-linked oxidoreductase penH to yield conjugated aryl diene. The delta(3') double bond then serves as the site of the second alkylation with DMAPP catalyzed by the prenyltransferase penG to yield a carbenium ion intermediate, which can be attacked by H(2)O to yield a styrenyl quinolone containing a C3'-hydroxyprenyl chain, or undergo cyclization to yield yaequinolones J1 and J2. The conversion of the styrenyl quinolone into the tetrahydrofuran-containing yaequinolone C is performed by the FAD-dependent monooxygenase penE and involves epoxidation of the terminal C7'-C8' olefin, followed by epoxide ring opening initiated by the C3' hydroxyl group. The predicted cysteine hydrolase penJ acts as an epoxide hydrolase that enhances the rate of the 5-exo-tet cyclization step, increasing the yield of yaequinolone C. PenF catalyzes the cationic rearrangement of the epoxide formed by penE (before ring opening to produce yaequinolone C) into yaequinolone D. Finally, the short-chain dehydrogenase/reductase (SDR)-like reductase penD, catalyzes both the dehydration of yaequinolone D and the reduction of the resulting oxonium to yield penigequinolone. This is Monooxygenase penA from Penicillium thymicola.